The sequence spans 544 residues: 4-coumarate--CoA ligase 1 (544 aa).

Residues Ser-190, Ser-191, Gly-192, Thr-193, Thr-194, and Lys-198 each contribute to the ATP site. Position 240 (Tyr-240) interacts with (E)-4-coumaroyl-AMP. Lys-261 contacts CoA. Residues 263–332 form an SBD1 region; it reads DIVPFLELIQ…AKFPNAKLGQ (70 aa). Positions 310, 332, 333, 337, and 345 each coordinate (E)-4-coumaroyl-AMP. 3 residues coordinate ATP: Gln-332, Gly-333, and Thr-337. An SBD2 region spans residues 333-400; it reads GYGMTEAGPV…IRGDQIMKGY (68 aa). 2 residues coordinate ATP: Asp-421 and Arg-436. Residues Lys-438 and Lys-442 each contribute to the (E)-4-coumaroyl-AMP site. CoA-binding residues include Lys-444 and Gly-445. Lys-527 is an ATP binding site.

It belongs to the ATP-dependent AMP-binding enzyme family. Mg(2+) is required as a cofactor.

It carries out the reaction (E)-4-coumarate + ATP + CoA = (E)-4-coumaroyl-CoA + AMP + diphosphate. It catalyses the reaction (E)-4-coumarate + ATP + H(+) = (E)-4-coumaroyl-AMP + diphosphate. The catalysed reaction is (E)-4-coumaroyl-AMP + CoA = (E)-4-coumaroyl-CoA + AMP + H(+). Its pathway is phytoalexin biosynthesis; 3,4',5-trihydroxystilbene biosynthesis; 3,4',5-trihydroxystilbene from trans-4-coumarate: step 1/2. Functionally, carboxylate--CoA ligase that may use 4-coumarate as substrate. Follows a two-step reaction mechanism, wherein the carboxylate substrate first undergoes adenylation by ATP, followed by a thioesterification in the presence of CoA to yield the final CoA thioester. The sequence is that of 4-coumarate--CoA ligase 1 (4CL1) from Petroselinum crispum (Parsley).